The chain runs to 393 residues: Methylthioribose kinase (393 aa).

ATP contacts are provided by residues Asn-38, Lys-53, and 107-109 (EDL). Substrate is bound at residue Asp-225. 242–244 (DPE) is an ATP binding site. Substrate is bound at residue Arg-332.

It belongs to the methylthioribose kinase family. As to quaternary structure, homodimer.

It carries out the reaction 5-(methylsulfanyl)-D-ribose + ATP = 5-(methylsulfanyl)-alpha-D-ribose 1-phosphate + ADP + H(+). Its pathway is amino-acid biosynthesis; L-methionine biosynthesis via salvage pathway; S-methyl-5-thio-alpha-D-ribose 1-phosphate from S-methyl-5'-thioadenosine (hydrolase route): step 2/2. Its function is as follows. Catalyzes the phosphorylation of methylthioribose into methylthioribose-1-phosphate. The polypeptide is Methylthioribose kinase (Bacillus cereus (strain AH820)).